The sequence spans 379 residues: Anthranilate O-methyltransferase 3 (379 aa).

A compositionally biased stretch (basic and acidic residues) spans 1–10; sequence MPMRIERDLH. Residues 1 to 21 are disordered; that stretch reads MPMRIERDLHMATGNGETSYT. Residue Y20 participates in S-adenosyl-L-homocysteine binding. Anthranilate is bound at residue Q27. S-adenosyl-L-homocysteine is bound by residues C61, N66, D100, L101, S143, and F144. Anthranilate contacts are provided by H164 and W165. E265 and F267 together coordinate Mg(2+).

Belongs to the methyltransferase superfamily. Type-7 methyltransferase family. SABATH subfamily.

It catalyses the reaction anthranilate + S-adenosyl-L-methionine = O-methyl anthranilate + S-adenosyl-L-homocysteine. The enzyme catalyses benzoate + S-adenosyl-L-methionine = methyl benzoate + S-adenosyl-L-homocysteine. The catalysed reaction is salicylate + S-adenosyl-L-methionine = methyl salicylate + S-adenosyl-L-homocysteine. Its function is as follows. Methyltransferase involved in the biosynthesis of methyl anthranilate in response to stresses. Utilizes anthranilic acid as substrate. Produces exclusively the O-methyl ester. Can also use benzoic acid as substrate. Low activity with salicylic acid. This chain is Anthranilate O-methyltransferase 3 (AAMT3), found in Zea mays (Maize).